The following is a 120-amino-acid chain: Prefoldin subunit beta (120 aa).

Belongs to the prefoldin subunit beta family. Heterohexamer of two alpha and four beta subunits.

The protein localises to the cytoplasm. Its function is as follows. Molecular chaperone capable of stabilizing a range of proteins. Seems to fulfill an ATP-independent, HSP70-like function in archaeal de novo protein folding. This is Prefoldin subunit beta from Methanothrix thermoacetophila (strain DSM 6194 / JCM 14653 / NBRC 101360 / PT) (Methanosaeta thermophila).